The sequence spans 392 residues: Phosphoglycerate kinase (392 aa).

Substrate-binding positions include Asp21–Asn23, Arg36, His59–Arg62, Arg113, and Arg146. Residues Lys197, Glu319, and Gly345–Thr348 contribute to the ATP site.

Belongs to the phosphoglycerate kinase family. In terms of assembly, monomer.

It localises to the cytoplasm. The enzyme catalyses (2R)-3-phosphoglycerate + ATP = (2R)-3-phospho-glyceroyl phosphate + ADP. Its pathway is carbohydrate degradation; glycolysis; pyruvate from D-glyceraldehyde 3-phosphate: step 2/5. The polypeptide is Phosphoglycerate kinase (Francisella tularensis subsp. novicida (strain U112)).